Consider the following 445-residue polypeptide: tRNA-2-methylthio-N(6)-dimethylallyladenosine synthase (445 aa).

Positions 2 to 119 (KKLYIRTFGC…LPQLIAERRH (118 aa)) constitute an MTTase N-terminal domain. The [4Fe-4S] cluster site is built by Cys11, Cys48, Cys82, Cys156, Cys160, and Cys163. The Radical SAM core domain occupies 142–378 (RVEGASAFVS…RIDQQAQAIS (237 aa)). In terms of domain architecture, TRAM spans 379–442 (QAMVGRVERA…PHSLRGEIVT (64 aa)).

The protein belongs to the methylthiotransferase family. MiaB subfamily. In terms of assembly, monomer. Requires [4Fe-4S] cluster as cofactor.

The protein localises to the cytoplasm. It carries out the reaction N(6)-dimethylallyladenosine(37) in tRNA + (sulfur carrier)-SH + AH2 + 2 S-adenosyl-L-methionine = 2-methylsulfanyl-N(6)-dimethylallyladenosine(37) in tRNA + (sulfur carrier)-H + 5'-deoxyadenosine + L-methionine + A + S-adenosyl-L-homocysteine + 2 H(+). Catalyzes the methylthiolation of N6-(dimethylallyl)adenosine (i(6)A), leading to the formation of 2-methylthio-N6-(dimethylallyl)adenosine (ms(2)i(6)A) at position 37 in tRNAs that read codons beginning with uridine. This Aromatoleum aromaticum (strain DSM 19018 / LMG 30748 / EbN1) (Azoarcus sp. (strain EbN1)) protein is tRNA-2-methylthio-N(6)-dimethylallyladenosine synthase.